A 151-amino-acid chain; its full sequence is IFN signaling evasion protein OPG029 (151 aa).

The protein belongs to the orthopoxvirus OPG029 family. Interacts with host TANK, TBKBP1 and AZI2; these interactions prevent interferon production. Interacts with host STAT2.

Prevents establishment of cellular antiviral state by blocking virus-induced phosphorylation and activation of interferon regulatory factors 3/IRF3 and 7/IRF7, transcription factors critical for the induction of interferons alpha and beta. This blockage is produced through the inhibition of host TBK1, by binding host TBK1 adapter proteins TBKBP1 and AZI2, thereby producing a strong inhibition of the phosphorylation and activation of IRF3 and IRF7. Also acts as an inhibitor of the cellular response to type I IFN by interacting with host STAT2. Mechanistically, exerts its inhibitory effect after host ISGF3 complex (composed of STAT1, STAT2 and IRF9) binding to the interferon stimulated response element (ISRE). The chain is IFN signaling evasion protein OPG029 (OPG029) from Homo sapiens (Human).